Reading from the N-terminus, the 690-residue chain is Eukaryotic translation initiation factor 3 subunit B (690 aa).

A compositionally biased stretch (basic and acidic residues) spans 1–11; that stretch reads MAKKKSEEHSG. Residues 1–36 form a disordered region; the sequence is MAKKKSEEHSGADANDSDYQEEPNFEDPPGFVDNIS. Over residues 15-25 the composition is skewed to acidic residues; the sequence is NDSDYQEEPNF. The 85-residue stretch at 57–141 folds into the RRM domain; it reads SVVVVDNIPK…HTFAVNLFTD (85 aa). 5 WD repeats span residues 207 to 246, 293 to 331, 334 to 369, 442 to 484, and 530 to 575; these read TRER…KIQK, DGMS…LLDL, IKIP…TLME, EIRE…KPSL, and PDHF…IKRT. The stretch at 595-645 forms a coiled coil; it reads EEKQKEIKKNLKKYYAAFEQKDRLRLTRASKELLEKRSQLRETFMEYRNKR.

It belongs to the eIF-3 subunit B family. In terms of assembly, component of the eukaryotic translation initiation factor 3 (eIF-3) complex. The eIF-3 complex interacts with pix. Interacts with mxt.

The protein resides in the cytoplasm. In terms of biological role, RNA-binding component of the eukaryotic translation initiation factor 3 (eIF-3) complex, which is involved in protein synthesis of a specialized repertoire of mRNAs and, together with other initiation factors, stimulates binding of mRNA and methionyl-tRNAi to the 40S ribosome. The eIF-3 complex specifically targets and initiates translation of a subset of mRNAs involved in cell proliferation. This is Eukaryotic translation initiation factor 3 subunit B from Drosophila yakuba (Fruit fly).